The sequence spans 445 residues: Probable fructoselysine/psicoselysine transporter FrlA (445 aa).

11 helical membrane-spanning segments follow: residues 10–32 (LGFW…FVSV), 39–61 (AGTP…PQMC), 97–119 (FWAN…LGFL), 126–143 (LGKF…LLHL), 153–175 (QTLI…IFWF), 188–210 (IGAT…SYTG), 230–252 (RALI…VISG), 272–294 (WIPA…VILG), 341–363 (GIFF…VMCF), 384–406 (LWRT…ILVA), and 411–433 (WAPI…AYAF).

It belongs to the amino acid-polyamine-organocation (APC) superfamily.

The protein resides in the cell inner membrane. It carries out the reaction N(6)-(D-fructosyl)-L-lysine(in) = N(6)-(D-fructosyl)-L-lysine(out). The enzyme catalyses N(6)-(D-psicosyl)-L-lysine(in) = N(6)-(D-psicosyl)-L-lysine(out). Its pathway is carbohydrate metabolism; fructoselysine degradation. Its function is as follows. Is likely involved in the transport of fructoselysine and psicoselysine to the cytoplasm, where they are degraded. The protein is Probable fructoselysine/psicoselysine transporter FrlA (frlA) of Escherichia coli O157:H7.